Here is a 316-residue protein sequence, read N- to C-terminus: UPF0725 protein At1g02770 (316 aa).

It belongs to the UPF0725 (EMB2204) family.

The chain is UPF0725 protein At1g02770 from Arabidopsis thaliana (Mouse-ear cress).